The chain runs to 564 residues: MRRPSTASLTRTPSRASPTRMPSRASLKMTPFRASLTKMESTALLRTLPRASLMRTPTRASLMRTPPRASPTRKPPRASPRTPSRASPTRRLPRASPMGSPHRASPMRTPPRASPTGTPSTASPTGTPSSASPTGTPPRASPTGTPPRAWATRSPSTASLTRTPSRASLTRWPPRASPTRTPPRESPRMSHRASPTRTPPRASPTRRPPRASPTRTPPRESLRTSHRASPTRMPPRASPTRRPPRASPTGSPPRASPMTPPRASPRTPPRASPTTTPSRASLTRTPSWASPTTTPSRASLMKMESTVSITRTPPRASPTGTPSRASPTGTPSRASLTGSPSRASLTGTPSRASLIGTPSRASLIGTPSRASLTGTPPRASLTGTSSTASLTRTPSRASLTRTQSSSSLTRTPSMASLTRTPPRASLTRTPPRASLTRTPPRASLTRTPPRASLTRTPSMVSLKRSPSRASLTRTPSRASLTMTPSRASLTRTPSTASLTGTPPTASLTRTPPTASLTRSPPTASLTRTPSTASLTRMPSTASLTRKSNVNQQCPASTPSSEVIS.

Residues 1–17 are compositionally biased toward polar residues; the sequence is MRRPSTASLTRTPSRAS. The tract at residues 1-564 is disordered; it reads MRRPSTASLT…ASTPSSEVIS (564 aa). Low complexity-rich tracts occupy residues 79-97 and 114-134; these read SPRTPSRASPTRRLPRASP and SPTGTPSTASPTGTPSSASPT. The span at 153–168 shows a compositional bias: polar residues; the sequence is RSPSTASLTRTPSRAS. Over residues 170–179 the composition is skewed to low complexity; that stretch reads TRWPPRASPT. A compositionally biased stretch (pro residues) spans 250 to 271; sequence GSPPRASPMTPPRASPRTPPRA. Residues 272–299 are compositionally biased toward low complexity; it reads SPTTTPSRASLTRTPSWASPTTTPSRAS. A compositionally biased stretch (polar residues) spans 318–351; the sequence is PTGTPSRASPTGTPSRASLTGSPSRASLTGTPSR. Residues 378–416 show a composition bias toward low complexity; sequence RASLTGTSSTASLTRTPSRASLTRTQSSSSLTRTPSMAS. Positions 467–564 are enriched in polar residues; sequence SRASLTRTPS…ASTPSSEVIS (98 aa).

This is an uncharacterized protein from Homo sapiens (Human).